The chain runs to 550 residues: Complement control protein (550 aa).

Positions 1-19 are cleaved as a signal peptide; that stretch reads MAFLRQTLWILWTFTMVIG. Sushi domains lie at 23–83, 84–150, 151–209, and 210–268; these read EKCS…TCNK, KSCP…FCEK, EKCH…TCEL, and AGCK…KCVL. Disulfide bonds link C25–C68, C53–C81, C86–C131, C116–C148, C153–C194, C180–C207, C212–C254, and C240–C266. N-linked (GlcNAc...) asparagine; by host glycosylation is found at N63 and N111. N-linked (GlcNAc...) asparagine; by host glycosylation occurs at N197. N-linked (GlcNAc...) asparagine; by host glycans are attached at residues N255, N275, and N299. The disordered stretch occupies residues 269 to 338; the sequence is EDIDDPNNSN…TSEGFNETTT (70 aa). Composition is skewed to polar residues over residues 288-302 and 312-321; these read EKPN…NYTE and TAATCDTNCE. Residues N334, N371, N374, and N378 are each glycosylated (N-linked (GlcNAc...) asparagine; by host). Disordered stretches follow at residues 387 to 408 and 420 to 516; these read TPTS…NYNT and IEEG…RPPA. Positions 424–440 are enriched in polar residues; it reads PSNSTTSEKATASTLSH. 4 N-linked (GlcNAc...) asparagine; by host glycosylation sites follow: N426, N445, N455, and N483. A compositionally biased stretch (polar residues) spans 450–476; it reads IYTTLNKTTQLPSTNKPTNSQAKSSTK. The span at 484–495 shows a compositional bias: polar residues; sequence KTTSNPAISLTD. The helical transmembrane segment at 528 to 548 threads the bilayer; it reads IGLLTAVALTCGLITLFHYLF.

The protein localises to the host membrane. Its subcellular location is the virion membrane. In terms of biological role, inhibits the complement component of the host innate immune response. Regulates host C3 convertases, accelerating their decay, and acts as a cofactor for factor I degradation of C4b and C3b. Also binds heparin, and therefore may play two distinct roles when incorporated in virion membranes: immune evasion and host cell binding. The protein is Complement control protein (ORF4) of Human herpesvirus 8 type P (isolate GK18) (HHV-8).